Consider the following 270-residue polypeptide: Undecaprenyl-diphosphatase (270 aa).

8 helical membrane-spanning segments follow: residues 14-34, 40-60, 88-108, 117-137, 146-166, 189-209, 221-241, and 249-269; these read GLTEVLPISSSAHLILIPTFL, GITFDVALHLGTFIALCLYFW, FYIIAGTFPAAIVGKLFETTI, SLIALFLIVFALLLAFADTSG, ITLKSAIIIGLAQCLALIPGV, FSFLLSLPIVAGAALFELSGL, PLLIGIATSAVFGYISVAFLL, and LYPFVWYRIAIGCLALVFINF.

The protein belongs to the UppP family.

The protein resides in the cell inner membrane. It carries out the reaction di-trans,octa-cis-undecaprenyl diphosphate + H2O = di-trans,octa-cis-undecaprenyl phosphate + phosphate + H(+). Catalyzes the dephosphorylation of undecaprenyl diphosphate (UPP). Confers resistance to bacitracin. This Geotalea daltonii (strain DSM 22248 / JCM 15807 / FRC-32) (Geobacter daltonii) protein is Undecaprenyl-diphosphatase.